A 299-amino-acid chain; its full sequence is Probable phosphate butyryltransferase (299 aa).

Belongs to the phosphate acetyltransferase and butyryltransferase family.

The enzyme catalyses butanoyl-CoA + phosphate = butanoyl phosphate + CoA. Its function is as follows. Catalyzes the conversion of butyryl-CoA through butyryl phosphate to butyrate. This is Probable phosphate butyryltransferase (yqiS) from Bacillus subtilis (strain 168).